Reading from the N-terminus, the 263-residue chain is Probable HTH-type transcriptional regulator ArcR (263 aa).

Residues 14–74 form the HTH iclR-type domain; that stretch reads ITSVLNAVEI…DGDGTYQLGD (61 aa). Residues 35–54 constitute a DNA-binding region (H-T-H motif); it reads LQELTTELDLTKATIHTYMA. Residues 89-262 form the IclR-ED domain; sequence LYRLGREEID…ANIIEVRLET (174 aa).

Its function is as follows. Probably regulates transcription of the arcABC operon. This is Probable HTH-type transcriptional regulator ArcR (arcR) from Halobacterium salinarum (strain ATCC 29341 / DSM 671 / R1).